The following is a 308-amino-acid chain: Aspartate carbamoyltransferase catalytic subunit (308 aa).

Carbamoyl phosphate contacts are provided by Arg57 and Thr58. Lys86 is a binding site for L-aspartate. Positions 107, 135, and 138 each coordinate carbamoyl phosphate. Arg167 and Arg228 together coordinate L-aspartate. The carbamoyl phosphate site is built by Leu267 and Pro268.

It belongs to the aspartate/ornithine carbamoyltransferase superfamily. ATCase family. In terms of assembly, heterooligomer of catalytic and regulatory chains.

The catalysed reaction is carbamoyl phosphate + L-aspartate = N-carbamoyl-L-aspartate + phosphate + H(+). Its pathway is pyrimidine metabolism; UMP biosynthesis via de novo pathway; (S)-dihydroorotate from bicarbonate: step 2/3. Functionally, catalyzes the condensation of carbamoyl phosphate and aspartate to form carbamoyl aspartate and inorganic phosphate, the committed step in the de novo pyrimidine nucleotide biosynthesis pathway. This Methanosarcina barkeri (strain Fusaro / DSM 804) protein is Aspartate carbamoyltransferase catalytic subunit.